The sequence spans 361 residues: 3-dehydroquinate synthase (361 aa).

NAD(+) contacts are provided by residues Asp69–Lys74, Gly103–Asp107, Thr127–Thr128, Lys140, Lys149, and Thr167–Thr170. Residues Glu182, His245, and His262 each contribute to the Zn(2+) site.

It belongs to the sugar phosphate cyclases superfamily. Dehydroquinate synthase family. The cofactor is Co(2+). Zn(2+) serves as cofactor. It depends on NAD(+) as a cofactor.

The protein resides in the cytoplasm. It catalyses the reaction 7-phospho-2-dehydro-3-deoxy-D-arabino-heptonate = 3-dehydroquinate + phosphate. Its pathway is metabolic intermediate biosynthesis; chorismate biosynthesis; chorismate from D-erythrose 4-phosphate and phosphoenolpyruvate: step 2/7. In terms of biological role, catalyzes the conversion of 3-deoxy-D-arabino-heptulosonate 7-phosphate (DAHP) to dehydroquinate (DHQ). This is 3-dehydroquinate synthase from Thioalkalivibrio sulfidiphilus (strain HL-EbGR7).